The chain runs to 202 residues: ATP synthase subunit b (202 aa).

The chain crosses the membrane as a helical span at residues 9–29 (TTLSLCLAVCVVVIAVGTGWA).

Belongs to the ATPase B chain family. As to quaternary structure, F-type ATPases have 2 components, F(1) - the catalytic core - and F(0) - the membrane proton channel. F(1) has five subunits: alpha(3), beta(3), gamma(1), delta(1), epsilon(1). F(0) has three main subunits: a(1), b(2) and c(10-14). The alpha and beta chains form an alternating ring which encloses part of the gamma chain. F(1) is attached to F(0) by a central stalk formed by the gamma and epsilon chains, while a peripheral stalk is formed by the delta and b chains.

The protein resides in the cell inner membrane. Its function is as follows. F(1)F(0) ATP synthase produces ATP from ADP in the presence of a proton or sodium gradient. F-type ATPases consist of two structural domains, F(1) containing the extramembraneous catalytic core and F(0) containing the membrane proton channel, linked together by a central stalk and a peripheral stalk. During catalysis, ATP synthesis in the catalytic domain of F(1) is coupled via a rotary mechanism of the central stalk subunits to proton translocation. Component of the F(0) channel, it forms part of the peripheral stalk, linking F(1) to F(0). The polypeptide is ATP synthase subunit b (Pelobacter propionicus (strain DSM 2379 / NBRC 103807 / OttBd1)).